Consider the following 111-residue polypeptide: Nucleoid-associated protein LBA0378 (111 aa).

It belongs to the YbaB/EbfC family. As to quaternary structure, homodimer.

The protein localises to the cytoplasm. Its subcellular location is the nucleoid. Binds to DNA and alters its conformation. May be involved in regulation of gene expression, nucleoid organization and DNA protection. The protein is Nucleoid-associated protein LBA0378 of Lactobacillus acidophilus (strain ATCC 700396 / NCK56 / N2 / NCFM).